Consider the following 417-residue polypeptide: Blood group Rh(CE) polypeptide (417 aa).

Transmembrane regions (helical) follow at residues 12-32 (CLPL…YFFT), 44-64 (LVAS…GLGF), 77-97 (VAFN…LDGF), 125-145 (ISAG…MVLV), 172-192 (FYVF…KPLP), 203-223 (TIPS…WPSV), 238-258 (MFNT…GSSL), 265-285 (ISMT…GTSC), 287-307 (LIPS…ISIG), 331-351 (IFSL…VLHT), and 358-378 (MIGF…VIAL).

It belongs to the ammonium transporter (TC 2.A.49) family. Rh subfamily. As to quaternary structure, heterotrimer; a RHCE monomer interacts with a RHAG homodimer. Component of the ankyrin-1 complex in the erythrocyte, composed of ANK1, RHCE, RHAG, SLC4A1, EPB42, GYPA, GYPB and AQP1. Interacts (via the N- and C-terminal) with ANK1 (via ANk 1-5 repeats); mediates the primary membrane attachment site for ANK1. Restricted to tissues or cell lines expressing erythroid characters. Isoform 4g and isoform RhPI-Alpha are expressed in immature erythroblasts but not in mature erythroblasts.

The protein resides in the membrane. Functionally, component of the ankyrin-1 complex, a multiprotein complex involved in the stability and shape of the erythrocyte membrane. Mediates the primary membrane attachment site for ANK1 when associated with RHAG. May participate in the ammonium and carbon dioxide transport through the heterotrimer form. This chain is Blood group Rh(CE) polypeptide, found in Homo sapiens (Human).